A 907-amino-acid chain; its full sequence is DNA (cytosine-5)-methyltransferase CMT3 (907 aa).

Low complexity predominate over residues 1-15; that stretch reads MAPSSPSSAAAPTRT. The tract at residues 1–154 is disordered; sequence MAPSSPSSAA…RNAATRRPDE (154 aa). A compositionally biased stretch (basic and acidic residues) spans 30 to 63; sequence ATDEPSTKRTRRPKAETKPRKKKDEVKEEEKPPM. The segment covering 64–89 has biased composition (acidic residues); that stretch reads EDDACGEEPDAEEMALGEEAEAEEAE. Basic and acidic residues-rich tracts occupy residues 115 to 124 and 131 to 140; these read HGSDGDHDPE and PAKEARDKWP. In terms of domain architecture, BAH spans 172–297; the sequence is TLYCLHDDVY…VAYSTFANIP (126 aa). A disordered region spans residues 303–323; sequence SGSDTASDISSDDVDSSKGKV. One can recognise an SAM-dependent MTase C5-type domain in the interval 335 to 868; it reads ATLLDLYSGC…YSLGLAYQRE (534 aa). The Chromo domain maps to 437–500; it reads FVVEKLAGIC…EGYRRKILPL (64 aa). The active site involves cysteine 513.

It belongs to the class I-like SAM-binding methyltransferase superfamily. C5-methyltransferase family.

It localises to the nucleus. It catalyses the reaction a 2'-deoxycytidine in DNA + S-adenosyl-L-methionine = a 5-methyl-2'-deoxycytidine in DNA + S-adenosyl-L-homocysteine + H(+). In terms of biological role, involved in CpXpG DNA methylation. Plays a critical role in the maintenance of CpXpG DNA methylation and suppression of a wide spectrum of transposable element (TE) activities. Required for proper plant development in reproductive stage. The chain is DNA (cytosine-5)-methyltransferase CMT3 from Oryza sativa subsp. japonica (Rice).